The primary structure comprises 548 residues: Fumarate hydratase class I, anaerobic (548 aa).

Cys105 contributes to the [4Fe-4S] cluster binding site. Lys192 carries the N6-acetyllysine modification. Positions 224 and 318 each coordinate [4Fe-4S] cluster.

The protein belongs to the class-I fumarase family. As to quaternary structure, homodimer. [4Fe-4S] cluster serves as cofactor.

The enzyme catalyses (S)-malate = fumarate + H2O. It catalyses the reaction (S,S)-tartrate = oxaloacetate + H2O. Its function is as follows. Catalyzes the reversible hydration of fumarate to (S)-malate. Functions in the generation of fumarate for use as an anaerobic electron acceptor. To a lesser extent, also displays D-tartrate dehydratase activity, but is not able to convert (R)-malate, L-tartrate or meso-tartrate. Is required for anaerobic growth on D-tartrate. The chain is Fumarate hydratase class I, anaerobic from Escherichia coli (strain K12).